A 166-amino-acid polypeptide reads, in one-letter code: MIALPRNRRPLFLAVFAYCAALLAFGLYLQHYQGIEPCPMCIMQRYAFALVGVIALVAGLHGPRGAGVRVYGGLLLLTALAGGSVAARQTWMQLYPPEIPECGPGLEYMLESFPLTSALPMIFRGAGDCSAIDWTFLGLSLANWSLLNFGAAALLALWLLFGRRVR.

The Cytoplasmic portion of the chain corresponds to 1–11; the sequence is MIALPRNRRPL. The helical transmembrane segment at 12-28 threads the bilayer; that stretch reads FLAVFAYCAALLAFGLY. Over 29–46 the chain is Periplasmic; it reads LQHYQGIEPCPMCIMQRY. Cysteine 38 and cysteine 41 are disulfide-bonded. The chain crosses the membrane as a helical span at residues 47–63; it reads AFALVGVIALVAGLHGP. Residues 64-70 lie on the Cytoplasmic side of the membrane; sequence RGAGVRV. Residues 71-87 form a helical membrane-spanning segment; sequence YGGLLLLTALAGGSVAA. Over 88–143 the chain is Periplasmic; sequence RQTWMQLYPPEIPECGPGLEYMLESFPLTSALPMIFRGAGDCSAIDWTFLGLSLAN. Cysteine 102 and cysteine 129 are disulfide-bonded. The helical transmembrane segment at 144–162 threads the bilayer; it reads WSLLNFGAAALLALWLLFG. Over 163 to 166 the chain is Cytoplasmic; that stretch reads RRVR.

It belongs to the DsbB family.

The protein localises to the cell inner membrane. Functionally, required for disulfide bond formation in some periplasmic proteins. Acts by oxidizing the DsbA protein. The chain is Disulfide bond formation protein B from Azoarcus sp. (strain BH72).